We begin with the raw amino-acid sequence, 512 residues long: Histidine ammonia-lyase (512 aa).

The segment at residues 142-144 is a cross-link (5-imidazolinone (Ala-Gly)); the sequence is ASG. Position 143 is a 2,3-didehydroalanine (Ser) (S143).

It belongs to the PAL/histidase family. In terms of processing, contains an active site 4-methylidene-imidazol-5-one (MIO), which is formed autocatalytically by cyclization and dehydration of residues Ala-Ser-Gly.

The protein resides in the cytoplasm. It carries out the reaction L-histidine = trans-urocanate + NH4(+). The protein operates within amino-acid degradation; L-histidine degradation into L-glutamate; N-formimidoyl-L-glutamate from L-histidine: step 1/3. This is Histidine ammonia-lyase from Bartonella quintana (strain Toulouse) (Rochalimaea quintana).